We begin with the raw amino-acid sequence, 146 residues long: Large ribosomal subunit protein uL23B (146 aa).

A disordered region spans residues 1 to 22 (MAPSSNKVGKAIQAKKAVVKGS).

The protein belongs to the universal ribosomal protein uL23 family.

Its function is as follows. This protein binds to a specific region on the 26S rRNA. The protein is Large ribosomal subunit protein uL23B (rpl-23A.2) of Caenorhabditis elegans.